The chain runs to 114 residues: uncharacterized protein (114 aa).

In terms of domain architecture, ABM spans 13–99; the sequence is YYAVIFSSVK…VWYESYAVRV (87 aa).

This is an uncharacterized protein from Bacillus subtilis (strain 168).